The chain runs to 660 residues: Potassium voltage-gated channel subfamily KQT member 1 (660 aa).

Residues 1 to 18 show a composition bias toward polar residues; that stretch reads MSSEVKSRWSGSGSQKSG. The tract at residues 1 to 67 is disordered; the sequence is MSSEVKSRWS…PESRAADSRA (67 aa). Topologically, residues 1 to 113 are cytoplasmic; the sequence is MSSEVKSRWS…YNFLERPTGW (113 aa). Positions 53 to 67 are enriched in basic and acidic residues; that stretch reads STDKNPESRAADSRA. The chain crosses the membrane as a helical span at residues 114–135; the sequence is KCFIYHFTVFLIVLVCLIFSVM. At 136-146 the chain is on the extracellular side; that stretch reads STIEQYHYFAN. A helical membrane pass occupies residues 147–169; that stretch reads RALVWMEIVLVVFFGTEYIVRLW. The Cytoplasmic portion of the chain corresponds to 170–185; it reads SAGCRSKYVGFWGRLR. A helical transmembrane segment spans residues 186–211; it reads FARKPISIIDLIVVVASVIVLCVGSN. At 212-219 the chain is on the extracellular side; sequence GQVFATSA. The chain crosses the membrane as a helical; Voltage-sensor span at residues 220–235; it reads IRGIRFLQILRMLHVD. Residues 236–253 are Cytoplasmic-facing; the sequence is RQGGTWRLLGSVVFIHRQ. An a 1,2-diacyl-sn-glycero-3-phospho-(1D-myo-inositol-4,5-bisphosphate)-binding site is contributed by Gln237. A helical transmembrane segment spans residues 254 to 276; it reads ELITTLYIGFLGLIFSSYFVYLA. Residues 277–292 are Extracellular-facing; it reads EKDAVDDSGSQQFGSY. The pore-forming intramembrane region spans 293–313; the sequence is ADALWWGVVTVTTIGYGDKVP. At 314 to 315 the chain is on the extracellular side; that stretch reads QT. A helical transmembrane segment spans residues 316 to 341; it reads WIGRTIASCFSVFAISFFALPAGILG. Residues 342-660 are Cytoplasmic-facing; that stretch reads SGFALKVQQK…RKDQDNQPDL (319 aa). The disordered stretch occupies residues 399–426; the sequence is SPSPKTKKSVGKRKKLKTDKDNGLNSEK. The segment covering 403–415 has biased composition (basic residues); it reads KTKKSVGKRKKLK. Positions 579–615 form a coiled coil; that stretch reads KNTIGARLNRVEEKFVHMDQKLNTITDMLHHLVAHQQ.

This sequence belongs to the potassium channel family. KQT (TC 1.A.1.15) subfamily. Kv7.1/KCNQ1 sub-subfamily. As to quaternary structure, tetramer. Heterotetramer with KCNE1; targets to the membrane raft. Interacts (via C-terminus) with CALM; forms a heterotetramer in a calcium-independent manner. Interacts with KCNE2; form a heterooligomer complex that targets to the membrane raft and leading to currents with an apparently instantaneous activation, a rapid deactivation process and a linear current-voltage relationship and decreases the amplitude of the outward current. Interacts with KCNE3; four KCNE3 molecules are bound to one KCNQ1 tetramer (4:4 KCNQ1:KCNE3 stoichiometry); alters membrane raft localization; affects KCNQ1 structure and gating properties. Interacts with KCNE4; impairs KCNQ1 localization in lipid rafts and inhibits voltage-gated potassium channel activity. Interacts with KCNE5; impairs KCNQ1 localization in lipid rafts and only conducts current upon strong and continued depolarization. Expressed only in rectal gland and heart. Faintly expressed in intestine. Undetectable in kidney, brain, testis, liver and gills.

The protein localises to the cell membrane. The protein resides in the cytoplasmic vesicle membrane. It is found in the membrane raft. It localises to the endoplasmic reticulum. Its subcellular location is the basolateral cell membrane. It carries out the reaction K(+)(in) = K(+)(out). PIP2 molecule is essential to activate KCNQ channels by inducing the coupling of the voltage-sensing domain (VSD) and the pore-forming domain (PD). Upon channel activation, PIP2 disrupts the VSD-calmodulin/CALM interactions, causing the release of CALM from the VSD which triggers the opening of the gate. Calcium potentiates KCNQ1 channel current through calcium-bound CALM. Calcium-bound CALM competes with PIP2 to stabilize the channel open state. Pore-forming subunit of the voltage-gated potassium (Kv) channel involved in the regulation of cardiomyocyte excitability and important in normal development and functions of myocardium, inner ear, stomach and colon. Associates with KCNE beta subunits that modulates current kinetics. Induces a voltage-dependent by rapidly activating and slowly deactivating potassium-selective outward current. Also promotes a delayed voltage activated potassium current showing outward rectification characteristic. During beta-adrenergic receptor stimulation participates in cardiac repolarization by associating with KCNE1 to form the I(Ks) cardiac potassium current that increases the amplitude and slows down the activation kinetics of outward potassium current I(Ks). When associated with KCNE3, forms the potassium channel that is important for cyclic AMP-stimulated intestinal secretion of chloride ions. When associated with KCNE2, forms a heterooligomer complex leading to currents with an apparently instantaneous activation, a rapid deactivation process and a linear current-voltage relationship and decreases the amplitude of the outward current. When associated with KCNE4, inhibits voltage-gated potassium channel activity. When associated with KCNE5, this complex only conducts current upon strong and continued depolarization. The chain is Potassium voltage-gated channel subfamily KQT member 1 from Squalus acanthias (Spiny dogfish).